The following is a 158-amino-acid chain: 6,7-dimethyl-8-ribityllumazine synthase (158 aa).

5-amino-6-(D-ribitylamino)uracil-binding positions include F22, 57–59, and 81–83; these read AVE and AVI. 86-87 provides a ligand contact to (2S)-2-hydroxy-3-oxobutyl phosphate; sequence GT. The active-site Proton donor is H89. Residue F114 participates in 5-amino-6-(D-ribitylamino)uracil binding. Residue R128 participates in (2S)-2-hydroxy-3-oxobutyl phosphate binding.

This sequence belongs to the DMRL synthase family. As to quaternary structure, forms an icosahedral capsid composed of 60 subunits, arranged as a dodecamer of pentamers.

The enzyme catalyses (2S)-2-hydroxy-3-oxobutyl phosphate + 5-amino-6-(D-ribitylamino)uracil = 6,7-dimethyl-8-(1-D-ribityl)lumazine + phosphate + 2 H2O + H(+). It functions in the pathway cofactor biosynthesis; riboflavin biosynthesis; riboflavin from 2-hydroxy-3-oxobutyl phosphate and 5-amino-6-(D-ribitylamino)uracil: step 1/2. In terms of biological role, catalyzes the formation of 6,7-dimethyl-8-ribityllumazine by condensation of 5-amino-6-(D-ribitylamino)uracil with 3,4-dihydroxy-2-butanone 4-phosphate. This is the penultimate step in the biosynthesis of riboflavin. The protein is 6,7-dimethyl-8-ribityllumazine synthase of Shewanella halifaxensis (strain HAW-EB4).